The primary structure comprises 228 residues: Cytokinin riboside 5'-monophosphate phosphoribohydrolase LOG5 (228 aa).

Residues glutamate 79, 97–98 (RK), and 114–120 (GYGTLEE) each bind substrate.

Belongs to the LOG family. As to expression, expressed in roots and shoots. Detected in vascular tissues of roots, cotyledons, and leaves, axillary buds, immature and mature flowers, fruit abscission zones and ovules.

It localises to the cytoplasm. The protein localises to the nucleus. The enzyme catalyses N(6)-(dimethylallyl)adenosine 5'-phosphate + H2O = N(6)-dimethylallyladenine + D-ribose 5-phosphate. The catalysed reaction is 9-ribosyl-trans-zeatin 5'-phosphate + H2O = trans-zeatin + D-ribose 5-phosphate. In terms of biological role, cytokinin-activating enzyme working in the direct activation pathway. Phosphoribohydrolase that converts inactive cytokinin nucleotides to the biologically active free-base forms. In Arabidopsis thaliana (Mouse-ear cress), this protein is Cytokinin riboside 5'-monophosphate phosphoribohydrolase LOG5 (LOG5).